The following is a 37-amino-acid chain: Large ribosomal subunit protein bL36c (37 aa).

This sequence belongs to the bacterial ribosomal protein bL36 family.

Its subcellular location is the plastid. It is found in the chloroplast. This chain is Large ribosomal subunit protein bL36c, found in Adiantum capillus-veneris (Maidenhair fern).